A 307-amino-acid polypeptide reads, in one-letter code: Melanoma-associated antigen F1 (307 aa).

The tract at residues Met-1–Thr-55 is disordered. Basic and acidic residues-rich tracts occupy residues Glu-16–Thr-27 and Glu-35–Gly-48. Residues Leu-76–Leu-277 enclose the MAGE domain.

Interacts (via MAGE domain) with RING-type zinc finger-containing E3 ubiquitin-protein ligases LNX1, TRIM27 and NSMCE1; the interaction is direct. In terms of tissue distribution, ubiquitous.

Functionally, enhances ubiquitin ligase activity of RING-type zinc finger-containing E3 ubiquitin ligases. Proposed to act through recruitment and/or stabilization of the E2 ubiquitin-conjugating enzyme at the E3:substrate complex. MAGEF1-NSMCE1 ubiquitin ligase complex promotes proteasomal degradation of MMS19, a key component of the cytosolic iron-sulfur protein assembly (CIA) machinery. Down-regulation of MMS19 impairs the activity of several DNA repair and metabolism enzymes such as ERCC2/XPD, FANCJ, RTEL1 and POLD1 that require iron-sulfur clusters as cofactors. May negatively regulate genome integrity by inhibiting homologous recombination-mediated double-strand break DNA repair. The polypeptide is Melanoma-associated antigen F1 (Homo sapiens (Human)).